A 25-amino-acid polypeptide reads, in one-letter code: MKRIGVLTSGGDSPGMNAAIRAVVR.

Gly-11 is an ATP binding site.

It belongs to the phosphofructokinase type A (PFKA) family. ATP-dependent PFK group I subfamily. Prokaryotic clade 'B1' sub-subfamily. As to quaternary structure, homotetramer. Mg(2+) serves as cofactor.

The protein resides in the cytoplasm. It carries out the reaction beta-D-fructose 6-phosphate + ATP = beta-D-fructose 1,6-bisphosphate + ADP + H(+). It participates in carbohydrate degradation; glycolysis; D-glyceraldehyde 3-phosphate and glycerone phosphate from D-glucose: step 3/4. Its activity is regulated as follows. In contrast with PFK1 this enzyme is not affected by phosphoenolpyruvate. Catalyzes the phosphorylation of D-fructose 6-phosphate to fructose 1,6-bisphosphate by ATP, the first committing step of glycolysis. The sequence is that of ATP-dependent 6-phosphofructokinase 2 (pfkA2) from Thermus thermophilus (strain ATCC 27634 / DSM 579 / HB8).